Reading from the N-terminus, the 294-residue chain is MTKKVFDDISRLALKALLYEVSLSPKPGLVDQLDNGAHDDMSFLTFVDSALALAPFFKTYLDIGFYHAKEDPGLIFERLRVSGIEAEQAMFSATKGVNTHKGVNFSLALLLGATGMYLASQPQLLAHVTAFTEEDSLAICQLVKPLTAHLLETDFGSLDLKKELTYGEKLFLDYGIKGPRGEASEGYPTIAHKALPFLRKSLRSTDQETAQLQLLVYLMSIVEDGNLIHRGGIKAWQRVKQDMRLLHNSALSATDLKAALSAYNDKLIQQHLSPGGTADLLVLSLYFAFLENQL.

This sequence belongs to the CitG/MdcB family.

The catalysed reaction is 3'-dephospho-CoA + ATP = 2'-(5''-triphospho-alpha-D-ribosyl)-3'-dephospho-CoA + adenine. The chain is Probable 2-(5''-triphosphoribosyl)-3'-dephosphocoenzyme-A synthase from Streptococcus equi subsp. zooepidemicus (strain MGCS10565).